A 130-amino-acid chain; its full sequence is Small ribosomal subunit protein uS8 (130 aa).

It belongs to the universal ribosomal protein uS8 family. In terms of assembly, part of the 30S ribosomal subunit. Contacts proteins S5 and S12.

In terms of biological role, one of the primary rRNA binding proteins, it binds directly to 16S rRNA central domain where it helps coordinate assembly of the platform of the 30S subunit. This chain is Small ribosomal subunit protein uS8, found in Hahella chejuensis (strain KCTC 2396).